A 281-amino-acid chain; its full sequence is sn-glycerol-3-phosphate transport system permease protein UgpE (281 aa).

A run of 6 helical transmembrane segments spans residues 16-36 (LILG…AATL), 85-105 (FSIT…IVWF), 113-133 (FFWM…FPTV), 142-162 (LDSY…TFLF), 202-222 (ALFV…LLII), and 247-267 (WNSV…IVLV). Residues 77–268 (LLNSFVMAFS…IPPVVIVLVM (192 aa)) enclose the ABC transmembrane type-1 domain.

The protein belongs to the binding-protein-dependent transport system permease family. UgpAE subfamily. As to quaternary structure, the complex is composed of two ATP-binding proteins (UgpC), two transmembrane proteins (UgpA and UgpE) and a solute-binding protein (UgpB).

The protein resides in the cell inner membrane. Functionally, part of the ABC transporter complex UgpBAEC involved in sn-glycerol-3-phosphate (G3P) import. Probably responsible for the translocation of the substrate across the membrane. Can also transport glycerophosphoryl diesters, which are hydrolyzed to G3P and alcohol during transport. The G3P moiety can be detected in the cytoplasm whereas the corresponding alcohol is usually found in the culture medium. It was proposed by Yang et al that the complex could also transport glycerol-2-phosphate (G2P) in vivo, but it was shown later by Wuttge et al that UgpB does not bind G2P, questioning this transport activity. G2P might be converted in the periplasm to G3P before its transport. This chain is sn-glycerol-3-phosphate transport system permease protein UgpE, found in Escherichia coli (strain K12).